The chain runs to 151 residues: Small ribosomal subunit protein uS15 (151 aa).

Lys27 carries the N6-acetyllysine; alternate modification. Lys27 is modified (N6-succinyllysine; alternate). Lys27 is covalently cross-linked (Glycyl lysine isopeptide (Lys-Gly) (interchain with G-Cter in ubiquitin)). The residue at position 30 (Ser30) is a Phosphoserine. At Lys34 the chain carries N6-succinyllysine. Phosphotyrosine is present on Tyr38. A Glycyl lysine isopeptide (Lys-Gly) (interchain with G-Cter in SUMO2) cross-link involves residue Lys43.

Belongs to the universal ribosomal protein uS15 family. Component of the small ribosomal subunit. Part of the small subunit (SSU) processome, composed of more than 70 proteins and the RNA chaperone small nucleolar RNA (snoRNA) U3. Ubiquitinated at Lys-27 by RNF14 and RNF25 in response to ribosome collisions (ribosome stalling).

The protein localises to the cytoplasm. It is found in the nucleus. Its subcellular location is the nucleolus. Its function is as follows. Component of the small ribosomal subunit. The ribosome is a large ribonucleoprotein complex responsible for the synthesis of proteins in the cell. Part of the small subunit (SSU) processome, first precursor of the small eukaryotic ribosomal subunit. During the assembly of the SSU processome in the nucleolus, many ribosome biogenesis factors, an RNA chaperone and ribosomal proteins associate with the nascent pre-rRNA and work in concert to generate RNA folding, modifications, rearrangements and cleavage as well as targeted degradation of pre-ribosomal RNA by the RNA exosome. This chain is Small ribosomal subunit protein uS15 (RPS13), found in Cricetulus griseus (Chinese hamster).